The sequence spans 917 residues: MFGKILRSIFGSKNDRELKRMGKQVKLINELESTFVKLTDEELKAKTAEFKKRHQDGESLNALLPEAFAAAREASKRVMGMRHFDVQLIGGMTLHEGCIAEMRTGEGKTLMATLAAYLNAISGKGVHIVTVNDYLARRDANWMTPLYAALGLTTGSVYSMQPQQEKREAYAADITYGTNNEFGFDYLRDNMALRKEDRMQRPLNFAIVDEVDSILIDEARTPLIISGAAEDSSELYRAINKFIPSLKRQEIVEKGEEPSELGHYTLDEKTRQVELTEMGHEVIEDTLTKAGLLKEDDSLYAAGNLGLLHHVYAALKAHVLFHRNVEYIIQNDQVVLIDEHTGRTMAGRRLSEGLHQALEAKEGLQIQAESQTLASTTFQNYFRIYPKLSGMTGTADTEAFEFRHIYGLNVVVIPTNKPIQRTDLNDLVFLSVEEKYEAIVRDVNEYRAKGVPVLVGTASVETSEAMSERLKKADIPHEVLNAKQHEREAEIIANAGRPGNVTIATNMAGRGTDIVLGGNLEAELAKLENPTEEQIAKVKSEWQTRHDQVVAAGGLHIIGTERHESRRIDNQLRGRAGRQGDPGLSRFYLSLEDNLMRIFASDRMRSFMQSIGMEKGEAIEHRMVTNAIEKAQRKVEGRNFDYRKQILEYDDVANDQRRVIYSQRNELLDADEIHDAIDGIRQDVIADVIAGFIPPQSVEEQWDVAGLEQSLANEYGVQLPIQKWLDDDDKLNEESLRDKITQAMDDAYNVKREQLGNSVVMLEKQLMLHVLDQLWKEHLQNMDHLRQGIGLRAYAQKNPKQEYKRESFEMFQTLLESLKHDVIRLLFRVQPMTEEQMNEMEKRRQEEAERQRQRMQLRHAEAPSQLAAPATPATPEELSELKPERPYVRGGSKVGRNDPCPCGSGQKYKSCHGKLTG.

Residues Gln-87, 105–109 (GEGKT), and Asp-513 contribute to the ATP site. Residues 834-917 (EEQMNEMEKR…YKSCHGKLTG (84 aa)) form a disordered region. Over residues 839 to 852 (EMEKRRQEEAERQR) the composition is skewed to basic and acidic residues. A compositionally biased stretch (low complexity) spans 862-876 (APSQLAAPATPATPE). 4 residues coordinate Zn(2+): Cys-900, Cys-902, Cys-911, and His-912.

This sequence belongs to the SecA family. In terms of assembly, monomer and homodimer. Part of the essential Sec protein translocation apparatus which comprises SecA, SecYEG and auxiliary proteins SecDF-YajC and YidC. The cofactor is Zn(2+).

The protein localises to the cell inner membrane. It localises to the cytoplasm. The catalysed reaction is ATP + H2O + cellular proteinSide 1 = ADP + phosphate + cellular proteinSide 2.. In terms of biological role, part of the Sec protein translocase complex. Interacts with the SecYEG preprotein conducting channel. Has a central role in coupling the hydrolysis of ATP to the transfer of proteins into and across the cell membrane, serving both as a receptor for the preprotein-SecB complex and as an ATP-driven molecular motor driving the stepwise translocation of polypeptide chains across the membrane. The chain is Protein translocase subunit SecA from Saccharophagus degradans (strain 2-40 / ATCC 43961 / DSM 17024).